The primary structure comprises 89 residues: MALDAETKKSIIDEYATHPGDTGSPEVQVAILTQRIRDLTEHLKEHKHDHHSRRGLLLLVGQRRRLLGYLADIDISRYRALIERLGLRR.

Belongs to the universal ribosomal protein uS15 family. In terms of assembly, part of the 30S ribosomal subunit. Forms a bridge to the 50S subunit in the 70S ribosome, contacting the 23S rRNA.

Its function is as follows. One of the primary rRNA binding proteins, it binds directly to 16S rRNA where it helps nucleate assembly of the platform of the 30S subunit by binding and bridging several RNA helices of the 16S rRNA. In terms of biological role, forms an intersubunit bridge (bridge B4) with the 23S rRNA of the 50S subunit in the ribosome. The sequence is that of Small ribosomal subunit protein uS15 from Leifsonia xyli subsp. xyli (strain CTCB07).